Reading from the N-terminus, the 139-residue chain is D-ribose pyranase (139 aa).

The active-site Proton donor is the H20. Substrate is bound by residues D28, H106, and 128–130; that span reads YAN.

Belongs to the RbsD / FucU family. RbsD subfamily. In terms of assembly, homodecamer.

The protein resides in the cytoplasm. It catalyses the reaction beta-D-ribopyranose = beta-D-ribofuranose. Its pathway is carbohydrate metabolism; D-ribose degradation; D-ribose 5-phosphate from beta-D-ribopyranose: step 1/2. Its function is as follows. Catalyzes the interconversion of beta-pyran and beta-furan forms of D-ribose. The protein is D-ribose pyranase of Salmonella typhi.